A 367-amino-acid polypeptide reads, in one-letter code: D-alanine--D-alanine ligase (367 aa).

The ATP-grasp domain maps to 139–340 (KLILKEKNIP…FSQVIDNMIS (202 aa)). 169-224 (KEVLEYPMIVKPARLGSSIGVKKVNDKCELEEAIETAFSFDDKVIVEKWIDSRELN) provides a ligand contact to ATP. Mg(2+) contacts are provided by Asp-298, Glu-311, and Asn-313.

This sequence belongs to the D-alanine--D-alanine ligase family. The cofactor is Mg(2+). Mn(2+) serves as cofactor.

It is found in the cytoplasm. The catalysed reaction is 2 D-alanine + ATP = D-alanyl-D-alanine + ADP + phosphate + H(+). It functions in the pathway cell wall biogenesis; peptidoglycan biosynthesis. Cell wall formation. This Thermosipho africanus (strain TCF52B) protein is D-alanine--D-alanine ligase.